We begin with the raw amino-acid sequence, 929 residues long: MSGRDNRAAGAGGGSGGGGGGGGGGGNHHHHHQPLSNAMGKLKEKLTRAGEELGYHRVESNLSASNTATSLDTILPEDPFPFPQAAPQRHPQQQFPFLQQQPQQQQQPQQQQQPQQQQQLQQHHTQHTQYQQQQQQQQPLRLLHDIDDEQPLSFRPLLEDDDIHEPPQEIQQQQLQQQRGNLRASGSLELTPLPPPPTSLEPHRDRQQRSVVNEELQRSKQSLKGSRVSFERAPQQSNSNNNSKNNSKTTVAADASDDDSFEDRRVGYQQQKATSVDHKGILKDLRHILASDNRRQFQAKKHVSLDIKGTPFLQDLLKDSSSEEEFHKTRREFQGRKHQSLDPRVTFKLDKVLHGSSTDSDEEGEDAEHKRLIHRPKDITKPVIIDLKDLESESDEDFLSSRQNFQQQRSISTDSRKSRRLYEMDEMGNKRGENIRHAVPFVRQITEDGKPKLEVYRPTTNPIYIWTQVLAALSVSLGSLVVGFSSAYTSPALVSMTDRNLTSFDVSTEDASWVGGIMPLAGLAGGIAGGPLIEYLGRRNTILATAVPFIISWLLIACAVNVPMVLSGRFLAGFCVGIASLSLPVYLGETVQPEVRGTLGLLPTAFGNIGILLCFIAGTYMDWSMLAFLGGALPVPFLILMFLIPETPRWYVSRGREERARKALVWLRGVEADVEPELKGLMRSQADADRQATHNTMLELLKRSNLKPLSISLGLMFFQQLSGINAVIFYTVQIFKDAGSTLDGNVCTIIVGTVNFIATFIGILLIDRAGRKILLYVSNIAMILTLFVLGGFFYCKANGMDVSNVGLLPLCCFVVYILGFSLGFGPIPWLMMGEILPAKIRGSAASVATAFNWTCTFVVTKSFLDMIKLIGAHGAFWLFGVICCIGMFFVIFCVPETQGKTLEDIERKMMGRVRRMSSVANIKPLSFNM.

The disordered stretch occupies residues Met1–Ser275. Over Met1 to Pro462 the chain is Cytoplasmic. Gly residues predominate over residues Gly10–Gly26. Over residues Lys41–Glu59 the composition is skewed to basic and acidic residues. The span at Ser60–Asp72 shows a compositional bias: polar residues. Low complexity-rich tracts occupy residues Ala85–Arg141, Gln168–Gln178, and Ser237–Asp254. Residues Ser320, Ser321, and Ser322 each carry the phosphoserine modification. A disordered region spans residues Val352–Arg371. Ser392 and Ser394 each carry phosphoserine. A disordered region spans residues Phe398–Arg420. Positions Arg402–Thr413 are enriched in polar residues. A helical transmembrane segment spans residues Ile463–Gly483. The Extracellular segment spans residues Phe484–Ser512. N-linked (GlcNAc...) asparagine glycosylation is present at Asn500. Residues Trp513–Ile533 traverse the membrane as a helical segment. The Cytoplasmic portion of the chain corresponds to Glu534–Thr541. Residues Ile542–Val562 form a helical membrane-spanning segment. Over Pro563 to Arg569 the chain is Extracellular. Residues Phe570–Thr590 form a helical membrane-spanning segment. At Val591–Arg596 the chain is on the cytoplasmic side. Residues Gly597–Ala617 form a helical membrane-spanning segment. Topologically, residues Gly618–Ser624 are extracellular. The chain crosses the membrane as a helical span at residues Met625–Pro645. Residues Glu646 to Pro708 are Cytoplasmic-facing. The helical transmembrane segment at Leu709–Phe729 threads the bilayer. Residues Tyr730–Asn745 are Extracellular-facing. Residues Val746 to Ile766 form a helical membrane-spanning segment. Over Asp767–Lys772 the chain is Cytoplasmic. The chain crosses the membrane as a helical span at residues Ile773 to Phe793. The Extracellular portion of the chain corresponds to Tyr794–Asn804. The chain crosses the membrane as a helical span at residues Val805 to Gly825. Over Pro826–Lys839 the chain is Cytoplasmic. Residues Ile840–Thr860 form a helical membrane-spanning segment. Residues Lys861–His873 lie on the Extracellular side of the membrane. A helical membrane pass occupies residues Gly874–Val894. Topologically, residues Pro895–Met929 are cytoplasmic. Phosphoserine is present on residues Ser917 and Ser918.

The protein belongs to the major facilitator superfamily. Sugar transporter (TC 2.A.1.1) family. Trehalose transporter subfamily.

It localises to the cell membrane. In terms of biological role, low-capacity facilitative transporter for trehalose. Does not transport maltose, sucrose or lactose. Mediates the bidirectional transfer of trehalose. Responsible for the transport of trehalose synthesized in the fat body and the incorporation of trehalose into other tissues that require a carbon source, thereby regulating trehalose levels in the hemolymph. The polypeptide is Facilitated trehalose transporter Tret1 (Drosophila grimshawi (Hawaiian fruit fly)).